A 226-amino-acid chain; its full sequence is CRISPR-associated protein Cas5 (226 aa).

This sequence belongs to the CRISPR-associated protein Cas5 family. Subtype I-A/Apern subfamily. As to quaternary structure, can form a Cascade complex with Csa5, Cas7, Cas3, Cas3' and Cas8a2.

CRISPR (clustered regularly interspaced short palindromic repeat) is an adaptive immune system that provides protection against mobile genetic elements (viruses, transposable elements and conjugative plasmids). CRISPR clusters contain spacers, sequences complementary to antecedent mobile elements, and target invading nucleic acids. CRISPR clusters are transcribed and processed into CRISPR RNA (crRNA). This Thermoproteus tenax (strain ATCC 35583 / DSM 2078 / JCM 9277 / NBRC 100435 / Kra 1) protein is CRISPR-associated protein Cas5 (cas5a).